We begin with the raw amino-acid sequence, 130 residues long: Holo-[acyl-carrier-protein] synthase (130 aa).

The Mg(2+) site is built by aspartate 8 and glutamate 62.

This sequence belongs to the P-Pant transferase superfamily. AcpS family. Mg(2+) serves as cofactor.

It is found in the cytoplasm. The catalysed reaction is apo-[ACP] + CoA = holo-[ACP] + adenosine 3',5'-bisphosphate + H(+). Functionally, transfers the 4'-phosphopantetheine moiety from coenzyme A to a Ser of acyl-carrier-protein. This chain is Holo-[acyl-carrier-protein] synthase, found in Variovorax paradoxus (strain S110).